Consider the following 652-residue polypeptide: uncharacterized protein (652 aa).

Over residues 1 to 13 (MSVTESKAKTERK) the composition is skewed to basic and acidic residues. Residues 1 to 21 (MSVTESKAKTERKSSRKPAKT) are disordered.

This sequence belongs to the ParB family.

This is an uncharacterized protein from Escherichia coli (strain K12).